The sequence spans 362 residues: Peptide chain release factor 1 (362 aa).

Position 238 is an N5-methylglutamine (Gln-238).

This sequence belongs to the prokaryotic/mitochondrial release factor family. Methylated by PrmC. Methylation increases the termination efficiency of RF1.

It is found in the cytoplasm. Functionally, peptide chain release factor 1 directs the termination of translation in response to the peptide chain termination codons UAG and UAA. In Psychrobacter arcticus (strain DSM 17307 / VKM B-2377 / 273-4), this protein is Peptide chain release factor 1.